The sequence spans 325 residues: Eukaryotic translation initiation factor 3 subunit I (325 aa).

WD repeat units lie at residues glycine 8 to threonine 47, glycine 50 to leucine 89, cysteine 144 to asparagine 183, glutamate 186 to threonine 225, and glycine 283 to glutamate 324.

Belongs to the eIF-3 subunit I family. In terms of assembly, component of the eukaryotic translation initiation factor 3 (eIF-3) complex, which is composed of 13 subunits: EIF3A, EIF3B, EIF3C, EIF3D, EIF3E, EIF3F, EIF3G, EIF3H, EIF3I, EIF3J, EIF3K, EIF3L and EIF3M.

The protein localises to the cytoplasm. Functionally, component of the eukaryotic translation initiation factor 3 (eIF-3) complex, which is involved in protein synthesis of a specialized repertoire of mRNAs and, together with other initiation factors, stimulates binding of mRNA and methionyl-tRNAi to the 40S ribosome. The eIF-3 complex specifically targets and initiates translation of a subset of mRNAs involved in cell proliferation. This is Eukaryotic translation initiation factor 3 subunit I from Taeniopygia guttata (Zebra finch).